Here is a 159-residue protein sequence, read N- to C-terminus: MAHTHCISGLVGKLVMESEVNCNADKYYKLYKHHEDLPSVIPHIYTSVKAVEGHGTTSGCVKEWGYILEGKPLSCKEKTTYNDETRTIHHMVVAGDLMNDYKKFDATLVVNPKSNGHGCIVKWTIDYEKMNEDSPVPFGYLACYQQITEDLSSHLCASD.

Belongs to the MLP family. As to expression, laticifer.

Its subcellular location is the vacuole. The protein localises to the cytoplasmic vesicle. Not known; MLPs constitute up to 50% of the soluble latex protein. The polypeptide is Major latex protein 146 (MLP146) (Papaver somniferum (Opium poppy)).